The following is a 359-amino-acid chain: ATP synthase subunit gamma, chloroplastic (359 aa).

The transit peptide at 1-35 directs the protein to the chloroplast; that stretch reads MSCSHLSTAWSSSALASSASTTRRRSPPRSGLLVR. Cys-124 is an active-site residue. The cysteines at positions 234 and 240 are disulfide-linked.

Belongs to the ATPase gamma chain family. As to quaternary structure, F-type ATPases have 2 components, CF(1) - the catalytic core - and CF(0) - the membrane proton channel. CF(1) has five subunits: alpha(3), beta(3), gamma(1), delta(1), epsilon(1). CF(0) has four main subunits: a, b, b' and c.

The protein localises to the plastid. It localises to the chloroplast thylakoid membrane. Functionally, produces ATP from ADP in the presence of a proton gradient across the membrane. The gamma chain is believed to be important in regulating ATPase activity and the flow of protons through the CF(0) complex. In terms of biological role, inceptin is a proteolytic fragment produced by insect larvae that previously ingested the protein. This peptide mediate plant perception of herbivory through the induction of volatile, phenylpropanoid and protease inhibitor defenses such as ethylene, jasmonic acid and salicylic acid for example. This chain is ATP synthase subunit gamma, chloroplastic, found in Zea mays (Maize).